The primary structure comprises 290 residues: Endoplasmic reticulum-Golgi intermediate compartment protein 1 (290 aa).

Residues 1–26 are Cytoplasmic-facing; sequence MPFDFRRFDIYRKVPKDLTQPTYTGA. The chain crosses the membrane as a helical span at residues 27–47; sequence IISICCCLFILFLFLSELTGF. Over 48–254 the chain is Lumenal; it reads ITTEVVNELY…RRQPLYRFIT (207 aa). N-linked (GlcNAc...) asparagine glycosylation occurs at asparagine 74. The helical transmembrane segment at 255–275 threads the bilayer; that stretch reads TICAIIGGTFTVAGILDSCIF. The Cytoplasmic portion of the chain corresponds to 276 to 290; that stretch reads TASEAWKKIQLGKMH.

Belongs to the ERGIC family. As to quaternary structure, may form a heteromeric complex composed of ERGIC1, ERGIC2 and ERGIC3. Within the complex, the interaction with ERGIC3 is direct. Interacts with ERGIC3/ERV46. N-glycosylated.

It is found in the endoplasmic reticulum membrane. The protein resides in the endoplasmic reticulum-Golgi intermediate compartment membrane. The protein localises to the golgi apparatus membrane. Possible role in transport between endoplasmic reticulum and Golgi. The protein is Endoplasmic reticulum-Golgi intermediate compartment protein 1 (ERGIC1) of Homo sapiens (Human).